A 334-amino-acid polypeptide reads, in one-letter code: Ornithine carbamoyltransferase subunit I (334 aa).

Carbamoyl phosphate contacts are provided by residues Ser56–Thr59, Gln83, Arg107, and His134–Gln137. Residues Asn168, Asp232, and Ser236–Met237 contribute to the L-ornithine site. Cys274 is a Zn(2+) binding site. Carbamoyl phosphate-binding positions include Cys274–Leu275 and Arg320.

This sequence belongs to the aspartate/ornithine carbamoyltransferase superfamily. OTCase family. As to quaternary structure, in E.coli strain K12, trimer of identical or non-identical chains are composed of ArgI (I) and/or ArgF (F). The trimer has the following composition: FFI, FFF, FII, III. E.coli strains B and W, which are known to contain only ArgI, produce only a trimer of identical chains (III).

It is found in the cytoplasm. The enzyme catalyses carbamoyl phosphate + L-ornithine = L-citrulline + phosphate + H(+). The protein operates within amino-acid biosynthesis; L-arginine biosynthesis; L-arginine from L-ornithine and carbamoyl phosphate: step 1/3. With respect to regulation, reversely inhibited by N-(N-Sulfodiaminophosphinyl)-L-ornithine. Zinc is an allosteric regulator of the substrate-bound enzyme and a competitive inhibitor of the free enzyme. Reversibly catalyzes the transfer of the carbamoyl group from carbamoyl phosphate (CP) to the N(epsilon) atom of ornithine (ORN) to produce L-citrulline, which is a substrate for argininosuccinate synthetase, the enzyme involved in the final step in arginine biosynthesis. The sequence is that of Ornithine carbamoyltransferase subunit I from Escherichia coli (strain K12).